A 350-amino-acid polypeptide reads, in one-letter code: Phosphotriesterase-related protein (350 aa).

The a divalent metal cation site is built by H22, H24, E169, H201, H230, and D298.

Belongs to the metallo-dependent hydrolases superfamily. Phosphotriesterase family. A divalent metal cation serves as cofactor.

In Drosophila ananassae (Fruit fly), this protein is Phosphotriesterase-related protein.